The chain runs to 504 residues: UDP-N-acetylmuramoylalanine--D-glutamate ligase (504 aa).

Residue 132–138 coordinates ATP; the sequence is GTNGKTT. Positions 286-295 are enriched in basic and acidic residues; that stretch reads DRDASDEPAP. Residues 286-305 are disordered; that stretch reads DRDASDEPAPKRRRKNEVAT.

The protein belongs to the MurCDEF family.

It is found in the cytoplasm. The enzyme catalyses UDP-N-acetyl-alpha-D-muramoyl-L-alanine + D-glutamate + ATP = UDP-N-acetyl-alpha-D-muramoyl-L-alanyl-D-glutamate + ADP + phosphate + H(+). It functions in the pathway cell wall biogenesis; peptidoglycan biosynthesis. In terms of biological role, cell wall formation. Catalyzes the addition of glutamate to the nucleotide precursor UDP-N-acetylmuramoyl-L-alanine (UMA). The polypeptide is UDP-N-acetylmuramoylalanine--D-glutamate ligase (Paraburkholderia xenovorans (strain LB400)).